Here is a 428-residue protein sequence, read N- to C-terminus: Enolase (428 aa).

Glutamine 173 provides a ligand contact to (2R)-2-phosphoglycerate. The active-site Proton donor is glutamate 217. Aspartate 253, glutamate 294, and aspartate 320 together coordinate Mg(2+). (2R)-2-phosphoglycerate contacts are provided by lysine 345, arginine 374, serine 375, and lysine 396. Lysine 345 serves as the catalytic Proton acceptor.

The protein belongs to the enolase family. The cofactor is Mg(2+).

The protein localises to the cytoplasm. It is found in the secreted. It localises to the cell surface. It carries out the reaction (2R)-2-phosphoglycerate = phosphoenolpyruvate + H2O. Its pathway is carbohydrate degradation; glycolysis; pyruvate from D-glyceraldehyde 3-phosphate: step 4/5. Functionally, catalyzes the reversible conversion of 2-phosphoglycerate (2-PG) into phosphoenolpyruvate (PEP). It is essential for the degradation of carbohydrates via glycolysis. The protein is Enolase of Methanosarcina barkeri (strain Fusaro / DSM 804).